Consider the following 244-residue polypeptide: Futalosine hydrolase (244 aa).

It belongs to the PNP/UDP phosphorylase family. Futalosine hydrolase subfamily.

The catalysed reaction is futalosine + H2O = dehypoxanthine futalosine + hypoxanthine. It participates in quinol/quinone metabolism; menaquinone biosynthesis. Functionally, catalyzes the hydrolysis of futalosine (FL) to dehypoxanthine futalosine (DHFL) and hypoxanthine, a step in the biosynthesis of menaquinone (MK, vitamin K2). Cannot directly use aminodeoxyfutalosine (AFL) as a substrate. This chain is Futalosine hydrolase, found in Acidothermus cellulolyticus (strain ATCC 43068 / DSM 8971 / 11B).